The following is a 142-amino-acid chain: Large ribosomal subunit protein uL13 (142 aa).

Belongs to the universal ribosomal protein uL13 family. As to quaternary structure, part of the 50S ribosomal subunit.

Its function is as follows. This protein is one of the early assembly proteins of the 50S ribosomal subunit, although it is not seen to bind rRNA by itself. It is important during the early stages of 50S assembly. The polypeptide is Large ribosomal subunit protein uL13 (Yersinia pseudotuberculosis serotype O:1b (strain IP 31758)).